Reading from the N-terminus, the 319-residue chain is Ribosomal RNA large subunit methyltransferase F (319 aa).

The interval 1–25 (MAPFFSAMTSKKQSQGLPKGPHPDN) is disordered. Positions 7–16 (AMTSKKQSQG) are enriched in polar residues.

This sequence belongs to the methyltransferase superfamily. METTL16/RlmF family.

It localises to the cytoplasm. The catalysed reaction is adenosine(1618) in 23S rRNA + S-adenosyl-L-methionine = N(6)-methyladenosine(1618) in 23S rRNA + S-adenosyl-L-homocysteine + H(+). Functionally, specifically methylates the adenine in position 1618 of 23S rRNA. The sequence is that of Ribosomal RNA large subunit methyltransferase F from Shewanella amazonensis (strain ATCC BAA-1098 / SB2B).